The following is a 237-amino-acid chain: Small ribosomal subunit protein uS3 (237 aa).

The region spanning 39–107 (IRAYLMEELK…ETHLNIVEVR (69 aa)) is the KH type-2 domain. The tract at residues 213–237 (MASERRATESDNQGGGGRDRRRENA) is disordered.

It belongs to the universal ribosomal protein uS3 family. In terms of assembly, part of the 30S ribosomal subunit. Forms a tight complex with proteins S10 and S14.

Its function is as follows. Binds the lower part of the 30S subunit head. Binds mRNA in the 70S ribosome, positioning it for translation. The protein is Small ribosomal subunit protein uS3 of Sinorhizobium fredii (strain NBRC 101917 / NGR234).